The chain runs to 1479 residues: Rhoptry neck protein 2 (1479 aa).

An N-terminal signal peptide occupies residues 1–24 (MTKRAGLPLGRAFLVLILLSAADS). Residues 25 to 1277 (LFFSSFPRSA…EQRRKSRKQA (1253 aa)) lie on the Cytoplasmic side of the membrane. Disordered regions lie at residues 49 to 68 (PDSD…TFRP) and 291 to 316 (VYAT…SPTS). A helical transmembrane segment spans residues 1278-1298 (IIGVLTLGMMGLYALLNVADI). An interaction with AMA1 region spans residues 1297-1333 (DIVQHMEDIGGAPPVSCVTNEILGVTCAPQAIAKATT). At 1299-1479 (VQHMEDIGGA…FPMSAPLIKA (181 aa)) the chain is on the extracellular side. A disulfide bridge links C1313 with C1323. A disordered region spans residues 1419–1445 (TYRKTEQETKQPPRPRNLHNPSSWGDT).

This sequence belongs to the apicomplexan parasites RON2 family. Component of the moving junction (MJ) complex, composed of AMA1, a transmembrane protein on the parasite surface, and a complex of the rhoptry neck proteins RON2, RON4, RON5 and RON8 localized to the cytoplasmic face of the host plasma membrane. Interacts (via C-terminus) with AMA1 (via ectodomain); RON2 serves as the receptor for AMA1 on the host plasma membrane. AMA1 and the RON proteins are initially in distinct compartments within the parasite, namely the micronemes and the rhoptries, and interaction happens only upon initiation of invasion when the micronemes and rhoptries discharge.

Its subcellular location is the secreted. It localises to the cytoplasm. The protein resides in the host cell membrane. Essential rhoptry neck protein that plays an important role in host cell invasion. Upon host invasion by tachyzoites, the protein is injected into the host cell where it functions as a receptor for apical membrane antigen 1 (AMA1) on the parasite. Part of the moving junction (MJ) complex, a ringlike structure formed between the plasma membranes of the apical tip of the parasite and the target host cell. During invasion, the MJ migrates from the anterior to the posterior of the parasite, leading to internalization of the parasite into a parasitophorous vacuole (PV). This chain is Rhoptry neck protein 2 (RON2), found in Toxoplasma gondii (strain ATCC 50611 / Me49).